Reading from the N-terminus, the 64-residue chain is Large ribosomal subunit protein bL35 (64 aa).

The protein belongs to the bacterial ribosomal protein bL35 family.

The sequence is that of Large ribosomal subunit protein bL35 from Levilactobacillus brevis (strain ATCC 367 / BCRC 12310 / CIP 105137 / JCM 1170 / LMG 11437 / NCIMB 947 / NCTC 947) (Lactobacillus brevis).